We begin with the raw amino-acid sequence, 385 residues long: Tryptophan--tRNA ligase (385 aa).

The 'HIGH' region signature appears at P82–H90. A 'KMSKS' region motif is present at residues K253–S257.

This sequence belongs to the class-I aminoacyl-tRNA synthetase family.

It localises to the cytoplasm. It catalyses the reaction tRNA(Trp) + L-tryptophan + ATP = L-tryptophyl-tRNA(Trp) + AMP + diphosphate + H(+). The protein is Tryptophan--tRNA ligase of Pyrococcus furiosus (strain ATCC 43587 / DSM 3638 / JCM 8422 / Vc1).